The chain runs to 647 residues: Threonine--tRNA ligase (647 aa).

Residues M1 to T61 enclose the TGS domain. Positions D240–P538 are catalytic. Zn(2+) contacts are provided by C334, H385, and H515.

The protein belongs to the class-II aminoacyl-tRNA synthetase family. Homodimer. Zn(2+) serves as cofactor.

Its subcellular location is the cytoplasm. The enzyme catalyses tRNA(Thr) + L-threonine + ATP = L-threonyl-tRNA(Thr) + AMP + diphosphate + H(+). Its function is as follows. Catalyzes the attachment of threonine to tRNA(Thr) in a two-step reaction: L-threonine is first activated by ATP to form Thr-AMP and then transferred to the acceptor end of tRNA(Thr). Also edits incorrectly charged L-seryl-tRNA(Thr). The sequence is that of Threonine--tRNA ligase from Streptococcus pyogenes serotype M49 (strain NZ131).